Here is a 1108-residue protein sequence, read N- to C-terminus: Alpha-mannosidase 2 (1108 aa).

The Cytoplasmic portion of the chain corresponds to methionine 1–alanine 9. The chain crosses the membrane as a helical; Signal-anchor for type II membrane protein span at residues leucine 10–alanine 30. The Lumenal segment spans residues alanine 31–serine 1108. Residues alanine 70–glycine 92 are disordered. Zn(2+)-binding residues include histidine 153, aspartate 155, aspartate 267, and histidine 534. The active-site Nucleophile is aspartate 267.

The protein belongs to the glycosyl hydrolase 38 family. Homodimer; disulfide-linked. Requires Zn(2+) as cofactor.

It localises to the golgi apparatus membrane. The enzyme catalyses N(4)-{beta-D-GlcNAc-(1-&gt;2)-alpha-D-Man-(1-&gt;3)-[alpha-D-Man-(1-&gt;3)-[alpha-D-Man-(1-&gt;6)]-alpha-D-Man-(1-&gt;6)]-beta-D-Man-(1-&gt;4)-beta-D-GlcNAc-(1-&gt;4)-beta-D-GlcNAc}-L-asparaginyl-[protein] + 2 H2O = 2 alpha-D-mannopyranose + an N(4)-{beta-D-GlcNAc-(1-&gt;2)-alpha-D-Man-(1-&gt;3)-[alpha-D-Man-(1-&gt;6)]-beta-D-Man-(1-&gt;4)-beta-D-GlcNAc-(1-&gt;4)-beta-D-GlcNAc}-L-asparaginyl-[protein]. It functions in the pathway protein modification; protein glycosylation. Its function is as follows. Catalyzes the first committed step in the biosynthesis of complex N-glycans. It controls conversion of high mannose to complex N-glycans; the final hydrolytic step in the N-glycan maturation pathway. This is Alpha-mannosidase 2 from Drosophila melanogaster (Fruit fly).